We begin with the raw amino-acid sequence, 219 residues long: Glycerol-3-phosphate acyltransferase 2 (219 aa).

The next 5 membrane-spanning stretches (helical) occupy residues 1–21 (MVFWIAGAVGLAIAYLLGSTP), 55–75 (WPALVVLLVDVLKGVGAVVFA), 93–113 (ALDLQSLEPWAVCLTGLAVLL), 135–155 (VLLAMSWPVGLGAAMVFGVAL), and 160–180 (IVSLSSMLAALTAIALVCGLE).

It belongs to the PlsY family. Probably interacts with PlsX.

It is found in the cell inner membrane. The enzyme catalyses an acyl phosphate + sn-glycerol 3-phosphate = a 1-acyl-sn-glycero-3-phosphate + phosphate. The protein operates within lipid metabolism; phospholipid metabolism. In terms of biological role, catalyzes the transfer of an acyl group from acyl-phosphate (acyl-PO(4)) to glycerol-3-phosphate (G3P) to form lysophosphatidic acid (LPA). This enzyme utilizes acyl-phosphate as fatty acyl donor, but not acyl-CoA or acyl-ACP. The chain is Glycerol-3-phosphate acyltransferase 2 from Rhizobium johnstonii (strain DSM 114642 / LMG 32736 / 3841) (Rhizobium leguminosarum bv. viciae).